We begin with the raw amino-acid sequence, 249 residues long: MLYKSSLKNKKRIQKENLRHIAIIMDGNGRWAEKRGKIRTLGHKEGFKTARKIIKYAVENNIKILTLYVFSRENWRRPKLEITALMKLFFFALKSEIKNLNKYNIRLKIIGDTSPFNENLKNYIHKVEKQTFNNTGLILNIAANYSGRWDIIRGIKKIIKDVQKDVLDIDQIQERNFSQYLSTSELLPVDLVIRTGGEKRISNFLLWQIAYSELYFTDILWPDFNWRDFQHAIDYFFTRERRFGGISIS.

Asp26 is a catalytic residue. Asp26 is a Mg(2+) binding site. Substrate-binding positions include 27–30, Trp31, Arg39, His43, and 71–73; these read GNGR and SRE. Residue Asn74 is the Proton acceptor of the active site. Substrate contacts are provided by residues Trp75, Arg77, Arg194, and 200-202; that span reads RIS. Glu213 is a binding site for Mg(2+).

It belongs to the UPP synthase family. In terms of assembly, homodimer. It depends on Mg(2+) as a cofactor.

The enzyme catalyses 8 isopentenyl diphosphate + (2E,6E)-farnesyl diphosphate = di-trans,octa-cis-undecaprenyl diphosphate + 8 diphosphate. In terms of biological role, catalyzes the sequential condensation of isopentenyl diphosphate (IPP) with (2E,6E)-farnesyl diphosphate (E,E-FPP) to yield (2Z,6Z,10Z,14Z,18Z,22Z,26Z,30Z,34E,38E)-undecaprenyl diphosphate (di-trans,octa-cis-UPP). UPP is the precursor of glycosyl carrier lipid in the biosynthesis of bacterial cell wall polysaccharide components such as peptidoglycan and lipopolysaccharide. In Buchnera aphidicola subsp. Schizaphis graminum (strain Sg), this protein is Ditrans,polycis-undecaprenyl-diphosphate synthase ((2E,6E)-farnesyl-diphosphate specific).